The chain runs to 224 residues: MKSQTKSSKVNRAWLNDHVNDTYVKLAKLEGYRARAAYKLKEIDETLGLIKPGQLVVDLGSTPGAWSQYVRRKMSPKTATGGGAAVGALNGTIIALDILPMEPVEGVVFLQGDFRESDVLLQLEAEMKGRQADLVLSDMAPNLSGIDSADAARIENLVELALEFAQNHMKPEGALVAKVFHGASYDPLVKRFKETFLLVKRIKPKASRDKSSETFLVGLGLKPH.

Positions 64, 66, 97, 113, and 138 each coordinate S-adenosyl-L-methionine. Lys-178 acts as the Proton acceptor in catalysis.

This sequence belongs to the class I-like SAM-binding methyltransferase superfamily. RNA methyltransferase RlmE family.

It is found in the cytoplasm. The enzyme catalyses uridine(2552) in 23S rRNA + S-adenosyl-L-methionine = 2'-O-methyluridine(2552) in 23S rRNA + S-adenosyl-L-homocysteine + H(+). Specifically methylates the uridine in position 2552 of 23S rRNA at the 2'-O position of the ribose in the fully assembled 50S ribosomal subunit. The sequence is that of Ribosomal RNA large subunit methyltransferase E from Albidiferax ferrireducens (strain ATCC BAA-621 / DSM 15236 / T118) (Rhodoferax ferrireducens).